Consider the following 298-residue polypeptide: Bifunctional protein FolD (298 aa).

NADP(+) is bound by residues 167 to 169 (GRS), Ser192, and Ile233.

The protein belongs to the tetrahydrofolate dehydrogenase/cyclohydrolase family. In terms of assembly, homodimer.

The catalysed reaction is (6R)-5,10-methylene-5,6,7,8-tetrahydrofolate + NADP(+) = (6R)-5,10-methenyltetrahydrofolate + NADPH. It carries out the reaction (6R)-5,10-methenyltetrahydrofolate + H2O = (6R)-10-formyltetrahydrofolate + H(+). The protein operates within one-carbon metabolism; tetrahydrofolate interconversion. Its function is as follows. Catalyzes the oxidation of 5,10-methylenetetrahydrofolate to 5,10-methenyltetrahydrofolate and then the hydrolysis of 5,10-methenyltetrahydrofolate to 10-formyltetrahydrofolate. In Caulobacter sp. (strain K31), this protein is Bifunctional protein FolD.